The following is a 144-amino-acid chain: Cathelicidin-4 (144 aa).

The signal sequence occupies residues M1–A29. The propeptide occupies Q30 to V130. Cystine bridges form between C85-C96 and C107-C124. An Arginine amide modification is found at R143.

Belongs to the cathelicidin family. Elastase might be responsible for its maturation. As to expression, large granules of neutrophils.

It is found in the secreted. Functionally, potent microbicidal activity; active against S.aureus and E.coli. The polypeptide is Cathelicidin-4 (CATHL4) (Bos taurus (Bovine)).